Here is a 580-residue protein sequence, read N- to C-terminus: FAD-dependent monooxygenase yanF (580 aa).

The segment at 1-21 (MSSSAECRPIGWGGWGPDPNT) is disordered. In terms of domain architecture, FAD-binding PCMH-type spans 150–322 (CRLNASCIVT…VEYDLTTNTG (173 aa)). His187 is subject to Pros-8alpha-FAD histidine.

It belongs to the oxygen-dependent FAD-linked oxidoreductase family.

It functions in the pathway secondary metabolite biosynthesis; terpenoid biosynthesis. Functionally, FAD-dependent monooxygenase; part of the gene cluster that mediates the biosynthesis of yanuthone D, a fungal isoprenoid epoxycyclohexenone that acts as an antibiotic against fungi and bacteria. The first step of the pathway is the synthesis of 6-methylsalicylic acid (6-MSA) by the polyketide synthase yanA. 6-MSA is then converted to m-cresol by the decarboxylase yanB. The cytochrome P450 monooxygenase yanC then catalyzes the oxidation of m-cresol to toluquinol. Epoxidation of toluquinol is then performed by the short chain dehydrogenase yanD, with the help of yanE, and a further prenylated by yanG leads to 7-deacetoxyyanuthone A. The next step is the hydroxylation of C-22 of 7-deacetoxyyanuthone A by the cytochrome P450 monooxygenase yanH to yield 22-deacetylyanuthone A. O-Mevalon transferase yanI then attaches mevalon to the hydroxyl group of 22-deacetylyanuthone A to produce yanuthone E. Finally, the FAD-dependent monooxygenase yanF oxidizes the hydroxyl group at C15 of yanuthone E to form yanuthone D. Furthermore, several branching points in the pathway lead to the production of yanuthones F and G from 7-deacetoxyyanuthone A; yanuthones H and I from 22-deacetylyanuthone A; and yanuthone J from yanuthone E. The polypeptide is FAD-dependent monooxygenase yanF (Aspergillus niger (strain ATCC 1015 / CBS 113.46 / FGSC A1144 / LSHB Ac4 / NCTC 3858a / NRRL 328 / USDA 3528.7)).